The chain runs to 58 residues: Large ribosomal subunit protein uL30 (58 aa).

Belongs to the universal ribosomal protein uL30 family. As to quaternary structure, part of the 50S ribosomal subunit.

The sequence is that of Large ribosomal subunit protein uL30 from Acinetobacter baylyi (strain ATCC 33305 / BD413 / ADP1).